The chain runs to 105 residues: Protein yippee-like At4g27740 (105 aa).

Residues 8-105 form the Yippee domain; that stretch reads PTYFCRNCEN…IEKLKLTKRY (98 aa). Zn(2+)-binding residues include Cys-12, Cys-15, Cys-68, and Cys-71.

Belongs to the yippee family.

The protein is Protein yippee-like At4g27740 of Arabidopsis thaliana (Mouse-ear cress).